A 153-amino-acid chain; its full sequence is Endoribonuclease YbeY (153 aa).

Zn(2+)-binding residues include histidine 118, histidine 122, and histidine 128.

It belongs to the endoribonuclease YbeY family. The cofactor is Zn(2+).

It is found in the cytoplasm. Single strand-specific metallo-endoribonuclease involved in late-stage 70S ribosome quality control and in maturation of the 3' terminus of the 16S rRNA. The protein is Endoribonuclease YbeY of Oenococcus oeni (strain ATCC BAA-331 / PSU-1).